Here is a 60-residue protein sequence, read N- to C-terminus: Toxin S4C8 (60 aa).

Cystine bridges form between Cys-3–Cys-22, Cys-17–Cys-39, Cys-41–Cys-52, and Cys-53–Cys-58. The segment at 41–48 (CPTAMWPY) is important for binding to L-type calcium channels.

The protein belongs to the three-finger toxin family. Short-chain subfamily. L-type calcium blocker sub-subfamily. In terms of tissue distribution, expressed by the venom gland.

It localises to the secreted. Its function is as follows. This specific blocker of the L-type calcium channel (Cav1/CACNA1) is a smooth muscle relaxant and an inhibitor of cardiac contractions. This chain is Toxin S4C8, found in Dendroaspis jamesoni kaimosae (Eastern Jameson's mamba).